A 411-amino-acid chain; its full sequence is LL-diaminopimelate aminotransferase (411 aa).

Tyr-15 and Gly-42 together coordinate substrate. Pyridoxal 5'-phosphate is bound by residues Tyr-72, Ser-108 to Lys-109, Tyr-132, Asn-187, Tyr-218, and Ser-246 to Ser-248. 3 residues coordinate substrate: Lys-109, Tyr-132, and Asn-187. Residue Lys-249 is modified to N6-(pyridoxal phosphate)lysine. The pyridoxal 5'-phosphate site is built by Arg-257 and Asn-292. Residues Asn-292 and Arg-388 each contribute to the substrate site.

The protein belongs to the class-I pyridoxal-phosphate-dependent aminotransferase family. LL-diaminopimelate aminotransferase subfamily. In terms of assembly, homodimer. It depends on pyridoxal 5'-phosphate as a cofactor.

It carries out the reaction (2S,6S)-2,6-diaminopimelate + 2-oxoglutarate = (S)-2,3,4,5-tetrahydrodipicolinate + L-glutamate + H2O + H(+). Its pathway is amino-acid biosynthesis; L-lysine biosynthesis via DAP pathway; LL-2,6-diaminopimelate from (S)-tetrahydrodipicolinate (aminotransferase route): step 1/1. Functionally, involved in the synthesis of meso-diaminopimelate (m-DAP or DL-DAP), required for both lysine and peptidoglycan biosynthesis. Catalyzes the direct conversion of tetrahydrodipicolinate to LL-diaminopimelate. The sequence is that of LL-diaminopimelate aminotransferase from Synechococcus elongatus (strain ATCC 33912 / PCC 7942 / FACHB-805) (Anacystis nidulans R2).